The primary structure comprises 147 residues: Sec-independent protein translocase protein TatB (147 aa).

The chain crosses the membrane as a helical span at residues 2-22; it reads FDGIGFMELLLIGVLGLVVLG. The disordered stretch occupies residues 68 to 147; it reads ESKGLSNLSP…DTRSNPKANG (80 aa). Positions 71–97 are enriched in polar residues; the sequence is GLSNLSPELQESIDQLKQAAQSVNRPY. The span at 112 to 133 shows a compositional bias: low complexity; the sequence is PASQSVSSEASPTASSAPTSEP.

This sequence belongs to the TatB family. The Tat system comprises two distinct complexes: a TatABC complex, containing multiple copies of TatA, TatB and TatC subunits, and a separate TatA complex, containing only TatA subunits. Substrates initially bind to the TatABC complex, which probably triggers association of the separate TatA complex to form the active translocon.

It localises to the cell inner membrane. Part of the twin-arginine translocation (Tat) system that transports large folded proteins containing a characteristic twin-arginine motif in their signal peptide across membranes. Together with TatC, TatB is part of a receptor directly interacting with Tat signal peptides. TatB may form an oligomeric binding site that transiently accommodates folded Tat precursor proteins before their translocation. The sequence is that of Sec-independent protein translocase protein TatB from Shewanella sp. (strain MR-4).